We begin with the raw amino-acid sequence, 407 residues long: Arginine deiminase (407 aa).

The Amidino-cysteine intermediate role is filled by C397.

It belongs to the arginine deiminase family.

Its subcellular location is the cytoplasm. The catalysed reaction is L-arginine + H2O = L-citrulline + NH4(+). The protein operates within amino-acid degradation; L-arginine degradation via ADI pathway; carbamoyl phosphate from L-arginine: step 1/2. In Salmonella arizonae (strain ATCC BAA-731 / CDC346-86 / RSK2980), this protein is Arginine deiminase.